Here is a 278-residue protein sequence, read N- to C-terminus: Small ribosomal subunit biogenesis GTPase RsgA (278 aa).

The CP-type G domain maps to 62–218 (KNTLVRPKVV…ICDTPGFNVI (157 aa)). Residues 112–115 (TKND) and 162–170 (GQSGVGKSS) each bind GTP. 4 residues coordinate Zn(2+): Cys-241, Cys-246, His-248, and Cys-254.

It belongs to the TRAFAC class YlqF/YawG GTPase family. RsgA subfamily. Monomer. Associates with 30S ribosomal subunit, binds 16S rRNA. Zn(2+) serves as cofactor.

The protein resides in the cytoplasm. Its function is as follows. One of several proteins that assist in the late maturation steps of the functional core of the 30S ribosomal subunit. Helps release RbfA from mature subunits. May play a role in the assembly of ribosomal proteins into the subunit. Circularly permuted GTPase that catalyzes slow GTP hydrolysis, GTPase activity is stimulated by the 30S ribosomal subunit. The chain is Small ribosomal subunit biogenesis GTPase RsgA from Mycoplasma pneumoniae (strain ATCC 29342 / M129 / Subtype 1) (Mycoplasmoides pneumoniae).